Reading from the N-terminus, the 76-residue chain is Small ribosomal subunit protein bS18 (76 aa).

It belongs to the bacterial ribosomal protein bS18 family. Part of the 30S ribosomal subunit. Forms a tight heterodimer with protein bS6.

Binds as a heterodimer with protein bS6 to the central domain of the 16S rRNA, where it helps stabilize the platform of the 30S subunit. In Mesoplasma florum (strain ATCC 33453 / NBRC 100688 / NCTC 11704 / L1) (Acholeplasma florum), this protein is Small ribosomal subunit protein bS18.